The sequence spans 47 residues: Large ribosomal subunit protein bL34 (47 aa).

This sequence belongs to the bacterial ribosomal protein bL34 family.

The sequence is that of Large ribosomal subunit protein bL34 from Mycobacteroides abscessus (strain ATCC 19977 / DSM 44196 / CCUG 20993 / CIP 104536 / JCM 13569 / NCTC 13031 / TMC 1543 / L948) (Mycobacterium abscessus).